A 264-amino-acid polypeptide reads, in one-letter code: 5'-nucleotidase SurE (264 aa).

A divalent metal cation-binding residues include Asp-8, Asp-9, Ser-39, and Asn-95.

This sequence belongs to the SurE nucleotidase family. It depends on a divalent metal cation as a cofactor.

It localises to the cytoplasm. The catalysed reaction is a ribonucleoside 5'-phosphate + H2O = a ribonucleoside + phosphate. Functionally, nucleotidase that shows phosphatase activity on nucleoside 5'-monophosphates. The polypeptide is 5'-nucleotidase SurE (Syntrophomonas wolfei subsp. wolfei (strain DSM 2245B / Goettingen)).